Consider the following 488-residue polypeptide: Ammonium transporter Rh type C-like 2 (488 aa).

Topologically, residues 1-21 (MGNCFGSRGICDRPKNTNIRL) are cytoplasmic. Residues 22–42 (SLPAVCFVWQVSMIILFGVFV) traverse the membrane as a helical segment. Over 43–73 (RYNEEADTNWVYTKKEKNITSDIENDFYFRY) the chain is Extracellular. An N-linked (GlcNAc...) asparagine glycan is attached at asparagine 60. A helical transmembrane segment spans residues 74-94 (PSFQDVHVMIFVGFGFLMTFL). The Cytoplasmic portion of the chain corresponds to 95–98 (KRYS). The helical transmembrane segment at 99 to 119 (FGAVGFNFLIAAFGLQWALLM) threads the bilayer. Topologically, residues 120–139 (QGWFSPLGDDGKIKIGIENL) are extracellular. Residues 140-160 (INADFCVASCLIAYGAVLGKV) traverse the membrane as a helical segment. Residues 161-162 (SP) are Cytoplasmic-facing. Residues 163–183 (VQLLVMTLFGITLYAVEEFII) traverse the membrane as a helical segment. The Extracellular portion of the chain corresponds to 184 to 191 (LRVLNAKD). Residues 192 to 214 (AGGSMVIHTFGAYYGLSISRVLY) traverse the membrane as a helical segment. The Cytoplasmic segment spans residues 215–232 (RPNLNKSKHMNGSVYHSD). Residues 233 to 253 (VFAMIGTLFLWMFWPSFNSAI) form a helical membrane-spanning segment. Residues 254-264 (CNHGDGQHRAA) are Extracellular-facing. The helical transmembrane segment at 265–285 (INTYLALASTVLTTVAISSMF) threads the bilayer. At 286–298 (EKTGKLDMVHIQN) the chain is on the cytoplasmic side. Residues 299–319 (STLAGGVAVGTAAEFMLMPYG) form a helical membrane-spanning segment. Serine 320 is a topological domain (extracellular). Residues 321–341 (LIVGFFCGIISTLGYIYLTPF) traverse the membrane as a helical segment. Over 342–356 (LEERLKIQDTCGIHN) the chain is Cytoplasmic. A helical transmembrane segment spans residues 357–377 (LHAMPGVIGGIVGAISAAAAS). At 378–409 (KEVYGDLGLKNIFSIEGSNVTRLPTVQGGYQA) the chain is on the extracellular side. Residues 410 to 430 (AALCVALCFGIGGGTFVGLVL) form a helical membrane-spanning segment. The Cytoplasmic portion of the chain corresponds to 431–488 (KLPIWGDPADEHCFNDEMYWEVPEDEESIIPPVLSYNNHMIPNNKHEEMRETNFAEQS).

This sequence belongs to the ammonium transporter (TC 2.A.49) family. Rh subfamily. As to quaternary structure, homotrimer. At larval stages, expressed only in the yolk sac and gill. However, the kidney and the gills are major sites of expression in adults.

The protein localises to the apical cell membrane. Functionally, functions as an ammonia transporter. May play a role in the elimination of ammonia in the gill. In Danio rerio (Zebrafish), this protein is Ammonium transporter Rh type C-like 2 (rhcgl2).